A 378-amino-acid polypeptide reads, in one-letter code: Mitogen-activated protein kinase mpkC (378 aa).

Residues 20-300 (YVNPQPIGMG…AQDALRHPYL (281 aa)) enclose the Protein kinase domain. Residues 26 to 34 (IGMGSFGLV) and Lys-49 contribute to the ATP site. The active-site Proton acceptor is the Asp-141.

It belongs to the protein kinase superfamily. Ser/Thr protein kinase family. MAP kinase subfamily. Mg(2+) is required as a cofactor.

It is found in the nucleus. It carries out the reaction L-seryl-[protein] + ATP = O-phospho-L-seryl-[protein] + ADP + H(+). It catalyses the reaction L-threonyl-[protein] + ATP = O-phospho-L-threonyl-[protein] + ADP + H(+). With respect to regulation, activated by threonine and tyrosine phosphorylation. In terms of biological role, mitogen-activated protein kinase (MAPK), part of the high-osmolarity glycerol (HOG) pathway. With sakA, plays a role in the osmotic and oxidative stress responses. Involved in paradoxical growth, the cell wall integrity (CWI) pathway and biofilm formation. SakA and mpkC collaborate during virulence and mpkC could act by modulating sakA activity upon exposure to several types of stresses and during cell wall biosynthesis. This Aspergillus fumigatus (strain CBS 144.89 / FGSC A1163 / CEA10) (Neosartorya fumigata) protein is Mitogen-activated protein kinase mpkC.